Here is a 693-residue protein sequence, read N- to C-terminus: Elongation factor G 1 (693 aa).

The 278-residue stretch at 4-281 (NKLRNIGISA…AVTRFLPSPH (278 aa)) folds into the tr-type G domain. Residues 13 to 20 (AHIDSGKT), 80 to 84 (DTPGH), and 134 to 137 (NKCD) contribute to the GTP site.

It belongs to the TRAFAC class translation factor GTPase superfamily. Classic translation factor GTPase family. EF-G/EF-2 subfamily.

It localises to the cytoplasm. Functionally, catalyzes the GTP-dependent ribosomal translocation step during translation elongation. During this step, the ribosome changes from the pre-translocational (PRE) to the post-translocational (POST) state as the newly formed A-site-bound peptidyl-tRNA and P-site-bound deacylated tRNA move to the P and E sites, respectively. Catalyzes the coordinated movement of the two tRNA molecules, the mRNA and conformational changes in the ribosome. The protein is Elongation factor G 1 of Borrelia garinii subsp. bavariensis (strain ATCC BAA-2496 / DSM 23469 / PBi) (Borreliella bavariensis).